We begin with the raw amino-acid sequence, 320 residues long: ATP-dependent 6-phosphofructokinase (320 aa).

Glycine 12 is a binding site for ATP. Residues 22 to 26 (RGVVR) and 55 to 60 (RYSVSD) each bind ADP. ATP contacts are provided by residues 73 to 74 (RF) and 103 to 106 (GDGS). Residue aspartate 104 coordinates Mg(2+). Position 126-128 (126-128 (TID)) interacts with substrate. The active-site Proton acceptor is aspartate 128. Arginine 155 contributes to the ADP binding site. Substrate-binding positions include arginine 163 and 170 to 172 (MGR). ADP-binding positions include 186–188 (GCE), lysine 212, and 214–216 (KKH). Substrate is bound by residues glutamate 223, arginine 244, and 250 to 253 (HIQR).

Belongs to the phosphofructokinase type A (PFKA) family. ATP-dependent PFK group I subfamily. Prokaryotic clade 'B1' sub-subfamily. In terms of assembly, homotetramer. Mg(2+) serves as cofactor.

It localises to the cytoplasm. The enzyme catalyses beta-D-fructose 6-phosphate + ATP = beta-D-fructose 1,6-bisphosphate + ADP + H(+). The protein operates within carbohydrate degradation; glycolysis; D-glyceraldehyde 3-phosphate and glycerone phosphate from D-glucose: step 3/4. With respect to regulation, allosterically activated by ADP and other diphosphonucleosides, and allosterically inhibited by phosphoenolpyruvate. In terms of biological role, catalyzes the phosphorylation of D-fructose 6-phosphate to fructose 1,6-bisphosphate by ATP, the first committing step of glycolysis. The polypeptide is ATP-dependent 6-phosphofructokinase (Buchnera aphidicola subsp. Baizongia pistaciae (strain Bp)).